A 279-amino-acid chain; its full sequence is 3-methyl-2-oxobutanoate hydroxymethyltransferase (279 aa).

2 residues coordinate Mg(2+): Asp-43 and Asp-82. 3-methyl-2-oxobutanoate contacts are provided by residues 43–44 (DS), Asp-82, and Lys-112. Glu-114 contributes to the Mg(2+) binding site. The active-site Proton acceptor is Glu-181.

This sequence belongs to the PanB family. Homodecamer; pentamer of dimers. The cofactor is Mg(2+).

The protein localises to the cytoplasm. The catalysed reaction is 3-methyl-2-oxobutanoate + (6R)-5,10-methylene-5,6,7,8-tetrahydrofolate + H2O = 2-dehydropantoate + (6S)-5,6,7,8-tetrahydrofolate. The protein operates within cofactor biosynthesis; (R)-pantothenate biosynthesis; (R)-pantoate from 3-methyl-2-oxobutanoate: step 1/2. Catalyzes the reversible reaction in which hydroxymethyl group from 5,10-methylenetetrahydrofolate is transferred onto alpha-ketoisovalerate to form ketopantoate. This Geobacillus sp. (strain WCH70) protein is 3-methyl-2-oxobutanoate hydroxymethyltransferase.